We begin with the raw amino-acid sequence, 304 residues long: Thyroxine 5-deiodinase (304 aa).

The segment at 1-23 (MPRQATSRLVVGEGEGSQGASGP) is disordered. Residues 1-44 (MPRQATSRLVVGEGEGSQGASGPAATMLRSLLLHSLRLCAQTAS) are Cytoplasmic-facing. A helical; Signal-anchor for type II membrane protein membrane pass occupies residues 45-67 (CLVLFPRFLGTAFMLWLLDFLCI). At 68–304 (RKHFLGRRRR…QLHGARPRRV (237 aa)) the chain is on the extracellular side. Residues 78 to 99 (GQPEPEVELNSEGEEVPPDDPP) are disordered. The segment covering 82 to 95 (PEVELNSEGEEVPP) has biased composition (acidic residues). Sec-170 is an active-site residue. A non-standard amino acid (selenocysteine) is located at residue Sec-170.

It belongs to the iodothyronine deiodinase family. Monomer. Homodimer. May undergo minor heretodimerization with DIO1 and DIO2. As to expression, expressed in placenta and several fetal tissues.

The protein localises to the cell membrane. It localises to the endosome membrane. The catalysed reaction is 3,3',5'-triiodo-L-thyronine + iodide + A + H(+) = L-thyroxine + AH2. It catalyses the reaction 3,3'-diiodo-L-thyronine + iodide + A + H(+) = 3,3',5-triiodo-L-thyronine + AH2. It carries out the reaction 3-iodo-L-thyronine + iodide + A + H(+) = 3,5-diiodo-L-thyronine + AH2. The enzyme catalyses L-thyronine + iodide + A + H(+) = 3-iodo-L-thyronine + AH2. The catalysed reaction is 3',5'-diiodo-L-thyronine + iodide + A + H(+) = 3,3',5'-triiodo-L-thyronine + AH2. It catalyses the reaction 3'-iodo-L-thyronine + iodide + A + H(+) = 3,3'-diiodo-L-thyronine + AH2. It carries out the reaction 3,3',5'-triiodothyronamine + iodide + A + H(+) = 3,3',5,5'-tetraiodothyronamine + AH2. The enzyme catalyses 3',5'-diiodothyronamine + iodide + A + H(+) = 3,3',5'-triiodothyronamine + AH2. The catalysed reaction is 3,3'-diiodothyronamine + iodide + A + H(+) = 3,3',5-triiodothyronamine + AH2. It catalyses the reaction 3-iodothyronamine + iodide + A + H(+) = 3,5-diiodothyronamine + AH2. It carries out the reaction 3'-iodothyronamine + iodide + A + H(+) = 3,3'-diiodothyronamine + AH2. The enzyme catalyses thyronamine + iodide + A + H(+) = 3-iodothyronamine + AH2. Its function is as follows. Plays a crucial role in the metabolism of thyroid hormones (TH) and has specific roles in TH activation and inactivation by deiodination. Catalyzes the deiodination of L-thyroxine (T4) to 3,3',5'-triiodothyronine (rT3), 3,5,3'-triiodothyronine (T3) to 3,3'-diiodothyronine (3,3'-T2), 3,5-diiodothyronine (3,5-T2) to 3-monoiodothyronine (3-T1), rT3 to 3',5'-diiodothyronine (3',5'-T2) and 3,3'-T2 to 3'-monoiodothyronine (3'-T1) via inner-ring deiodination (IRD). Catalyzes the deiodination of 3-T1 to L-thyronine (T0) via outer-ring deiodination (ORD). Catalyzes the tyrosyl ring deiodinations of 3,3',5,5'-tetraiodothyronamine, 3,3',5'-triiodothyronamine, 3,5,3'-triiodothyronamine, 3,5-diiodothyronamine, 3,3'-diiodothyronamine and 3-iodothyronamine. The protein is Thyroxine 5-deiodinase (DIO3) of Homo sapiens (Human).